A 517-amino-acid polypeptide reads, in one-letter code: 2,3-bisphosphoglycerate-independent phosphoglycerate mutase (517 aa).

Positions 14 and 64 each coordinate Mn(2+). The active-site Phosphoserine intermediate is Ser-64. Substrate-binding positions include His-125, 155–156 (RD), Arg-187, Arg-193, 259–262 (RPDR), and Lys-334. The Mn(2+) site is built by Asp-401, His-405, Asp-442, His-443, and His-461.

The protein belongs to the BPG-independent phosphoglycerate mutase family. In terms of assembly, monomer. The cofactor is Mn(2+).

The enzyme catalyses (2R)-2-phosphoglycerate = (2R)-3-phosphoglycerate. It participates in carbohydrate degradation; glycolysis; pyruvate from D-glyceraldehyde 3-phosphate: step 3/5. Its function is as follows. Catalyzes the interconversion of 2-phosphoglycerate and 3-phosphoglycerate. The sequence is that of 2,3-bisphosphoglycerate-independent phosphoglycerate mutase from Symbiobacterium thermophilum (strain DSM 24528 / JCM 14929 / IAM 14863 / T).